The sequence spans 366 residues: Peptide chain release factor 2 (366 aa).

The residue at position 253 (Q253) is an N5-methylglutamine.

Belongs to the prokaryotic/mitochondrial release factor family. In terms of processing, methylated by PrmC. Methylation increases the termination efficiency of RF2.

The protein localises to the cytoplasm. Functionally, peptide chain release factor 2 directs the termination of translation in response to the peptide chain termination codons UGA and UAA. This is Peptide chain release factor 2 from Yersinia pestis.